The sequence spans 263 residues: Putative TATA-binding protein pB263R (263 aa).

It belongs to the asfivirus B263R family.

Its function is as follows. Putative TATA-binding protein. In Ornithodoros (relapsing fever ticks), this protein is Putative TATA-binding protein pB263R.